The primary structure comprises 316 residues: Pantothenate kinase (316 aa).

95-102 provides a ligand contact to ATP; it reads GSVAVGKS.

The protein belongs to the prokaryotic pantothenate kinase family.

It is found in the cytoplasm. It catalyses the reaction (R)-pantothenate + ATP = (R)-4'-phosphopantothenate + ADP + H(+). The protein operates within cofactor biosynthesis; coenzyme A biosynthesis; CoA from (R)-pantothenate: step 1/5. This Cronobacter sakazakii (strain ATCC BAA-894) (Enterobacter sakazakii) protein is Pantothenate kinase.